Consider the following 593-residue polypeptide: DNA primase (593 aa).

A CHC2-type zinc finger spans residues 40–64; the sequence is CPFHHEKTPSFTVSQKKQFYHCFGC. Residues 260-342 form the Toprim domain; it reads KQLLVVEGYM…GRQLKFIFLP (83 aa). Residues glutamate 266, aspartate 310, and aspartate 312 each coordinate Mg(2+).

This sequence belongs to the DnaG primase family. In terms of assembly, monomer. Interacts with DnaB. Zn(2+) is required as a cofactor. The cofactor is Mg(2+).

It catalyses the reaction ssDNA + n NTP = ssDNA/pppN(pN)n-1 hybrid + (n-1) diphosphate.. In terms of biological role, RNA polymerase that catalyzes the synthesis of short RNA molecules used as primers for DNA polymerase during DNA replication. This chain is DNA primase, found in Haemophilus influenzae (strain ATCC 51907 / DSM 11121 / KW20 / Rd).